The following is a 928-amino-acid chain: Isoleucine--tRNA ligase (928 aa).

The 'HIGH' region signature appears at 57–67 (PFANGNIHMGH). L-isoleucyl-5'-AMP is bound at residue Glu554. A 'KMSKS' region motif is present at residues 595–599 (KMSKS). Lys598 is a binding site for ATP. Cys887, Cys890, Cys907, and Cys910 together coordinate Zn(2+).

This sequence belongs to the class-I aminoacyl-tRNA synthetase family. IleS type 1 subfamily. Monomer. It depends on Zn(2+) as a cofactor.

The protein resides in the cytoplasm. It catalyses the reaction tRNA(Ile) + L-isoleucine + ATP = L-isoleucyl-tRNA(Ile) + AMP + diphosphate. In terms of biological role, catalyzes the attachment of isoleucine to tRNA(Ile). As IleRS can inadvertently accommodate and process structurally similar amino acids such as valine, to avoid such errors it has two additional distinct tRNA(Ile)-dependent editing activities. One activity is designated as 'pretransfer' editing and involves the hydrolysis of activated Val-AMP. The other activity is designated 'posttransfer' editing and involves deacylation of mischarged Val-tRNA(Ile). The sequence is that of Isoleucine--tRNA ligase from Lactobacillus johnsonii (strain CNCM I-12250 / La1 / NCC 533).